Consider the following 1028-residue polypeptide: Formin-like protein 3 (1028 aa).

G2 is lipidated: N-myristoyl glycine. In terms of domain architecture, GBD/FH3 spans 26–472 (MPMPEPCELE…EAFQRRCHLE (447 aa)). T95 bears the Phosphothreonine mark. S174 carries the phosphoserine modification. Positions 493 to 541 (ELSEGMPPSDLDLLAPAPPPEEVLPLPPPPAPPLPPPPPPLPDKCPPAP) are disordered. Over residues 508-541 (PAPPPEEVLPLPPPPAPPLPPPPPPLPDKCPPAP) the composition is skewed to pro residues. In terms of domain architecture, FH2 spans 561 to 951 (IKKPIKTKFR…MREKQLAQEA (391 aa)). The 33-residue stretch at 986-1018 (YEGKDGTIEDIITVLKSVPFTARTAKRGSRFFC) folds into the DAD domain. A Phosphoserine modification is found at S1014.

Belongs to the formin homology family. As to quaternary structure, interacts with SRGAP2 (via SH3 domain). In terms of tissue distribution, expressed in endothelial cells.

Its subcellular location is the cytoplasm. The protein resides in the cell membrane. Its function is as follows. Plays a role in the regulation of cell morphology and cytoskeletal organization. Required in the control of cell shape and migration. Required for developmental angiogenesis. In this process, required for microtubule reorganization and for efficient endothelial cell elongation. In quiescent endothelial cells, triggers rearrangement of the actin cytoskeleton, but does not alter microtubule alignement. This chain is Formin-like protein 3 (FMNL3), found in Homo sapiens (Human).